A 208-amino-acid chain; its full sequence is Uracil phosphoribosyltransferase (208 aa).

5-phospho-alpha-D-ribose 1-diphosphate-binding positions include Arg-78, Arg-103, and 130–138; that span reads DPMLATANS. Uracil contacts are provided by residues Ile-193 and 198-200; that span reads GDA. Asp-199 provides a ligand contact to 5-phospho-alpha-D-ribose 1-diphosphate.

This sequence belongs to the UPRTase family. It depends on Mg(2+) as a cofactor.

It catalyses the reaction UMP + diphosphate = 5-phospho-alpha-D-ribose 1-diphosphate + uracil. It participates in pyrimidine metabolism; UMP biosynthesis via salvage pathway; UMP from uracil: step 1/1. Allosterically activated by GTP. Functionally, catalyzes the conversion of uracil and 5-phospho-alpha-D-ribose 1-diphosphate (PRPP) to UMP and diphosphate. The chain is Uracil phosphoribosyltransferase from Brucella canis (strain ATCC 23365 / NCTC 10854 / RM-666).